The chain runs to 308 residues: Bifunctional protein FolD (308 aa).

NADP(+) is bound by residues 171–173 (GRS), Ser-198, and Ile-239.

This sequence belongs to the tetrahydrofolate dehydrogenase/cyclohydrolase family. Homodimer.

The enzyme catalyses (6R)-5,10-methylene-5,6,7,8-tetrahydrofolate + NADP(+) = (6R)-5,10-methenyltetrahydrofolate + NADPH. It carries out the reaction (6R)-5,10-methenyltetrahydrofolate + H2O = (6R)-10-formyltetrahydrofolate + H(+). It functions in the pathway one-carbon metabolism; tetrahydrofolate interconversion. Functionally, catalyzes the oxidation of 5,10-methylenetetrahydrofolate to 5,10-methenyltetrahydrofolate and then the hydrolysis of 5,10-methenyltetrahydrofolate to 10-formyltetrahydrofolate. This Borreliella burgdorferi (strain ATCC 35210 / DSM 4680 / CIP 102532 / B31) (Borrelia burgdorferi) protein is Bifunctional protein FolD.